Consider the following 392-residue polypeptide: Queuine tRNA-ribosyltransferase (392 aa).

The active-site Proton acceptor is the Asp93. Substrate is bound by residues 93 to 97 (DSGGY), Asp147, Gln189, and Gly216. Residues 247–253 (GVGAPED) are RNA binding. Asp266 serves as the catalytic Nucleophile. An RNA binding; important for wobble base 34 recognition region spans residues 271–275 (TRVAR). 4 residues coordinate Zn(2+): Cys304, Cys306, Cys309, and His335.

The protein belongs to the queuine tRNA-ribosyltransferase family. Homodimer. Within each dimer, one monomer is responsible for RNA recognition and catalysis, while the other monomer binds to the replacement base PreQ1. Requires Zn(2+) as cofactor.

The catalysed reaction is 7-aminomethyl-7-carbaguanine + guanosine(34) in tRNA = 7-aminomethyl-7-carbaguanosine(34) in tRNA + guanine. It participates in tRNA modification; tRNA-queuosine biosynthesis. In terms of biological role, catalyzes the base-exchange of a guanine (G) residue with the queuine precursor 7-aminomethyl-7-deazaguanine (PreQ1) at position 34 (anticodon wobble position) in tRNAs with GU(N) anticodons (tRNA-Asp, -Asn, -His and -Tyr). Catalysis occurs through a double-displacement mechanism. The nucleophile active site attacks the C1' of nucleotide 34 to detach the guanine base from the RNA, forming a covalent enzyme-RNA intermediate. The proton acceptor active site deprotonates the incoming PreQ1, allowing a nucleophilic attack on the C1' of the ribose to form the product. After dissociation, two additional enzymatic reactions on the tRNA convert PreQ1 to queuine (Q), resulting in the hypermodified nucleoside queuosine (7-(((4,5-cis-dihydroxy-2-cyclopenten-1-yl)amino)methyl)-7-deazaguanosine). The chain is Queuine tRNA-ribosyltransferase from Dehalococcoides mccartyi (strain CBDB1).